The following is a 425-amino-acid chain: Oxytetracycline polyketide putative beta-ketoacyl synthase 1 (425 aa).

One can recognise a Ketosynthase family 3 (KS3) domain in the interval 7-420 (ARRVVITGIG…GFQSAIVLTE (414 aa)). Residues Cys-173, His-313, and His-350 each act as for beta-ketoacyl synthase activity in the active site.

The protein belongs to the thiolase-like superfamily. Beta-ketoacyl-ACP synthases family.

Its pathway is antibiotic biosynthesis; oxytetracycline biosynthesis. The sequence is that of Oxytetracycline polyketide putative beta-ketoacyl synthase 1 from Streptomyces rimosus.